A 543-amino-acid chain; its full sequence is Chaperonin GroEL (543 aa).

Residues 29 to 32, 86 to 90, Gly413, 478 to 480, and Asp494 each bind ATP; these read TLGP, DGTTT, and NAA.

Belongs to the chaperonin (HSP60) family. As to quaternary structure, forms a cylinder of 14 subunits composed of two heptameric rings stacked back-to-back. Interacts with the co-chaperonin GroES.

The protein resides in the cytoplasm. The catalysed reaction is ATP + H2O + a folded polypeptide = ADP + phosphate + an unfolded polypeptide.. Its function is as follows. Together with its co-chaperonin GroES, plays an essential role in assisting protein folding. The GroEL-GroES system forms a nano-cage that allows encapsulation of the non-native substrate proteins and provides a physical environment optimized to promote and accelerate protein folding. The polypeptide is Chaperonin GroEL (Lactobacillus johnsonii (strain CNCM I-12250 / La1 / NCC 533)).